The primary structure comprises 512 residues: Cytochrome P450 monooxygenase paxQ (512 aa).

The next 2 helical transmembrane spans lie at 3-23 (FVLS…LVSI) and 35-55 (LQIP…ISAL). C453 provides a ligand contact to heme.

It belongs to the cytochrome P450 family. Requires heme as cofactor.

Its subcellular location is the membrane. It functions in the pathway secondary metabolite biosynthesis. Cytochrome P450 monooxygenase; part of the gene cluster that mediates the biosynthesis of paxilline, a mycotoxin that acts as an inhibitor of mammalian maxi-K channels. PaxG, the geranylgeranyl diphosphate (GGPP) synthase is proposed to catalyze the first step in paxilline biosynthesis. Condensation of indole-3-glycerol phosphate with GGPP by paxC then forms 3-geranylgeranylindole (3-GGI), followed by epoxidation and cyclization of this intermediate (by paxM and paxB) to form paspaline. Paspaline is subsequently converted to 13-desoxypaxilline by paxP, the latter being then converted to paxilline by paxQ. Finally paxilline can be mono- and di-prenylated by paxD. PaxQ can also utilized beta-paxitriol and alpha-PC-M6 as substrates converting them to alpha-paxitriol. The protein is Cytochrome P450 monooxygenase paxQ of Penicillium paxilli.